A 168-amino-acid chain; its full sequence is Small ribosomal subunit protein uS5c (168 aa).

The S5 DRBM domain maps to 17-80 (WSERVIQITR…SDCKKQIIEF (64 aa)).

It belongs to the universal ribosomal protein uS5 family. In terms of assembly, part of the 30S ribosomal subunit. Contacts protein S4.

Its subcellular location is the plastid. It localises to the chloroplast. Its function is as follows. With S4 and S12 plays an important role in translational accuracy. This Cyanidium caldarium (Red alga) protein is Small ribosomal subunit protein uS5c (rps5).